The primary structure comprises 156 residues: MASEGIKVISDNRKAYHDYFVEEKLEAGVILTGTEIKSIRNGRVNLKDSYARIENGEVWLYQLHISPYEQGNRFNHDPLRKRKLLLNRSEIIKLVGKVQQQGLTLIPTKIYLKRGLAKIELGVCRGKKNYDKRQDIAERDAKREIERHFRDQGKGY.

This sequence belongs to the SmpB family.

Its subcellular location is the cytoplasm. Required for rescue of stalled ribosomes mediated by trans-translation. Binds to transfer-messenger RNA (tmRNA), required for stable association of tmRNA with ribosomes. tmRNA and SmpB together mimic tRNA shape, replacing the anticodon stem-loop with SmpB. tmRNA is encoded by the ssrA gene; the 2 termini fold to resemble tRNA(Ala) and it encodes a 'tag peptide', a short internal open reading frame. During trans-translation Ala-aminoacylated tmRNA acts like a tRNA, entering the A-site of stalled ribosomes, displacing the stalled mRNA. The ribosome then switches to translate the ORF on the tmRNA; the nascent peptide is terminated with the 'tag peptide' encoded by the tmRNA and targeted for degradation. The ribosome is freed to recommence translation, which seems to be the essential function of trans-translation. The protein is SsrA-binding protein of Desulfitobacterium hafniense (strain DSM 10664 / DCB-2).